The chain runs to 117 residues: Large ribosomal subunit protein bL20 (117 aa).

It belongs to the bacterial ribosomal protein bL20 family.

Its function is as follows. Binds directly to 23S ribosomal RNA and is necessary for the in vitro assembly process of the 50S ribosomal subunit. It is not involved in the protein synthesizing functions of that subunit. The sequence is that of Large ribosomal subunit protein bL20 from Limosilactobacillus reuteri (strain DSM 20016) (Lactobacillus reuteri).